Consider the following 434-residue polypeptide: Maltotriose-binding protein (434 aa).

The first 20 residues, 1–20, serve as a signal peptide directing secretion; sequence MRRATYAFALLAILVLGVVA. The disordered stretch occupies residues 28–52; it reads TTTPTQTSPATQPTTTQTPTQTETQ. Over residues 29–52 the composition is skewed to low complexity; the sequence is TTPTQTSPATQPTTTQTPTQTETQ.

Belongs to the bacterial solute-binding protein 1 family.

In terms of biological role, involved in an abc transport system for maltotriose. Binds maltotriose much more tightly than maltose. This Pyrococcus furiosus (strain ATCC 43587 / DSM 3638 / JCM 8422 / Vc1) protein is Maltotriose-binding protein (malE).